Consider the following 189-residue polypeptide: Isopentenyl-diphosphate Delta-isomerase 2 (189 aa).

The Mn(2+) site is built by His24 and His30. In terms of domain architecture, Nudix hydrolase spans 28–160 (ALHRAISIFV…PETYSFWLAA (133 aa)). Residue Cys65 is part of the active site. Cys65 contributes to the Mg(2+) binding site. Residue His67 coordinates Mn(2+). Glu85 serves as a coordination point for Mg(2+). The Mn(2+) site is built by Glu110 and Glu112. Glu112 is a catalytic residue.

It belongs to the IPP isomerase type 1 family. Requires Mg(2+) as cofactor. The cofactor is Mn(2+).

Its subcellular location is the cytoplasm. The enzyme catalyses isopentenyl diphosphate = dimethylallyl diphosphate. Its pathway is isoprenoid biosynthesis; dimethylallyl diphosphate biosynthesis; dimethylallyl diphosphate from isopentenyl diphosphate: step 1/1. Its function is as follows. Catalyzes the 1,3-allylic rearrangement of the homoallylic substrate isopentenyl (IPP) to its highly electrophilic allylic isomer, dimethylallyl diphosphate (DMAPP). The sequence is that of Isopentenyl-diphosphate Delta-isomerase 2 from Aromatoleum aromaticum (strain DSM 19018 / LMG 30748 / EbN1) (Azoarcus sp. (strain EbN1)).